A 419-amino-acid polypeptide reads, in one-letter code: D-inositol 3-phosphate glycosyltransferase (419 aa).

His9 serves as a coordination point for 1D-myo-inositol 3-phosphate. Residues 15–16 (QP) and Gly23 each bind UDP-N-acetyl-alpha-D-glucosamine. Residues 20–25 (DAGGMN), Lys78, Tyr110, Thr134, and Arg154 each bind 1D-myo-inositol 3-phosphate. UDP-N-acetyl-alpha-D-glucosamine-binding residues include Arg231, Lys236, and Arg295. Mg(2+)-binding residues include Tyr304, Arg305, and Ala307. UDP-N-acetyl-alpha-D-glucosamine-binding residues include Glu317 and Glu325. Thr331 is a binding site for Mg(2+).

The protein belongs to the glycosyltransferase group 1 family. MshA subfamily. In terms of assembly, homodimer.

It carries out the reaction 1D-myo-inositol 3-phosphate + UDP-N-acetyl-alpha-D-glucosamine = 1D-myo-inositol 2-acetamido-2-deoxy-alpha-D-glucopyranoside 3-phosphate + UDP + H(+). Functionally, catalyzes the transfer of a N-acetyl-glucosamine moiety to 1D-myo-inositol 3-phosphate to produce 1D-myo-inositol 2-acetamido-2-deoxy-glucopyranoside 3-phosphate in the mycothiol biosynthesis pathway. This is D-inositol 3-phosphate glycosyltransferase from Corynebacterium jeikeium (strain K411).